A 285-amino-acid polypeptide reads, in one-letter code: Ribosomal RNA small subunit methyltransferase A (285 aa).

N11, L13, G37, E57, D85, and N105 together coordinate S-adenosyl-L-methionine.

It belongs to the class I-like SAM-binding methyltransferase superfamily. rRNA adenine N(6)-methyltransferase family. RsmA subfamily.

The protein localises to the cytoplasm. It catalyses the reaction adenosine(1518)/adenosine(1519) in 16S rRNA + 4 S-adenosyl-L-methionine = N(6)-dimethyladenosine(1518)/N(6)-dimethyladenosine(1519) in 16S rRNA + 4 S-adenosyl-L-homocysteine + 4 H(+). Its function is as follows. Specifically dimethylates two adjacent adenosines (A1518 and A1519) in the loop of a conserved hairpin near the 3'-end of 16S rRNA in the 30S particle. May play a critical role in biogenesis of 30S subunits. This chain is Ribosomal RNA small subunit methyltransferase A, found in Campylobacter curvus (strain 525.92).